Consider the following 331-residue polypeptide: Phosphoribosylformylglycinamidine cyclo-ligase (331 aa).

It belongs to the AIR synthase family.

It localises to the cytoplasm. The catalysed reaction is 2-formamido-N(1)-(5-O-phospho-beta-D-ribosyl)acetamidine + ATP = 5-amino-1-(5-phospho-beta-D-ribosyl)imidazole + ADP + phosphate + H(+). Its pathway is purine metabolism; IMP biosynthesis via de novo pathway; 5-amino-1-(5-phospho-D-ribosyl)imidazole from N(2)-formyl-N(1)-(5-phospho-D-ribosyl)glycinamide: step 2/2. In Clostridium botulinum (strain Langeland / NCTC 10281 / Type F), this protein is Phosphoribosylformylglycinamidine cyclo-ligase.